The chain runs to 402 residues: CCA-adding enzyme (402 aa).

ATP is bound by residues glycine 32 and arginine 35. Residues glycine 32 and arginine 35 each contribute to the CTP site. Residues aspartate 45 and aspartate 47 each coordinate Mg(2+). 5 residues coordinate ATP: arginine 119, aspartate 162, arginine 165, arginine 168, and arginine 171. Residues arginine 119, aspartate 162, arginine 165, arginine 168, and arginine 171 each contribute to the CTP site.

This sequence belongs to the tRNA nucleotidyltransferase/poly(A) polymerase family. Bacterial CCA-adding enzyme type 3 subfamily. Homodimer. Mg(2+) serves as cofactor.

The enzyme catalyses a tRNA precursor + 2 CTP + ATP = a tRNA with a 3' CCA end + 3 diphosphate. It catalyses the reaction a tRNA with a 3' CCA end + 2 CTP + ATP = a tRNA with a 3' CCACCA end + 3 diphosphate. Catalyzes the addition and repair of the essential 3'-terminal CCA sequence in tRNAs without using a nucleic acid template. Adds these three nucleotides in the order of C, C, and A to the tRNA nucleotide-73, using CTP and ATP as substrates and producing inorganic pyrophosphate. tRNA 3'-terminal CCA addition is required both for tRNA processing and repair. Also involved in tRNA surveillance by mediating tandem CCA addition to generate a CCACCA at the 3' terminus of unstable tRNAs. While stable tRNAs receive only 3'-terminal CCA, unstable tRNAs are marked with CCACCA and rapidly degraded. In Lactococcus lactis subsp. cremoris (strain MG1363), this protein is CCA-adding enzyme.